A 381-amino-acid chain; its full sequence is Tryptophan--tRNA ligase (381 aa).

A 'HIGH' region motif is present at residues 82–90; the sequence is PSLGMHIGH. The short motif at 254–258 is the 'KMSKS' region element; it reads KMSSS.

It belongs to the class-I aminoacyl-tRNA synthetase family.

The protein resides in the cytoplasm. The enzyme catalyses tRNA(Trp) + L-tryptophan + ATP = L-tryptophyl-tRNA(Trp) + AMP + diphosphate + H(+). The polypeptide is Tryptophan--tRNA ligase (Sulfurisphaera tokodaii (strain DSM 16993 / JCM 10545 / NBRC 100140 / 7) (Sulfolobus tokodaii)).